We begin with the raw amino-acid sequence, 180 residues long: MSRIGKKPVQIPEKVEVSVKGDLISIKGPKGSLDRSLHPAVKLAIENGMVNVSVTDDQDRKTVALQGLFRSLVANMITGVSVGYEKKLLLNGIGYRAEVNGNTVVLNVGYSNPVNFELPKGISALVEKNTTLSLSGIDKEIVGETAARIRRIRPPEPYKGKGIMYSDERIIKKAGKAAAK.

The protein belongs to the universal ribosomal protein uL6 family. As to quaternary structure, part of the 50S ribosomal subunit.

In terms of biological role, this protein binds to the 23S rRNA, and is important in its secondary structure. It is located near the subunit interface in the base of the L7/L12 stalk, and near the tRNA binding site of the peptidyltransferase center. The sequence is that of Large ribosomal subunit protein uL6 from Desulforapulum autotrophicum (strain ATCC 43914 / DSM 3382 / VKM B-1955 / HRM2) (Desulfobacterium autotrophicum).